The sequence spans 3961 residues: MSGILDRCTCTPNARVFVAEGQVYCTRCLSARSLLPLNLQVSELGVLGLFYRPEEPLRWTLPRAFPTVECSPAGACWLSAIFPIARMTSGNLNFQQRMVRVAAEIYRAGQLTPAVLKALQVYERGCRWYPIVGPVPGVAVFANSLHVSDKPFPGATHVLTNLPLPQRPKPEDFCPFECAMATVYDIGHDAVMYVAEGKISWAPRGGDEVKFEAVPGELKLIANRLRTSFPPHHAVDMSKFAFTAPGCGVSMRVERQHGCLPADTVPEGNCWWSLFDLLPLEVQDKEIRHANQFGYQTKHGVSGKYLQRRLQVNGLRAVTDSNGPIVVQYFSVKESWIRHLKLAGEPSYSGFEDLLRIRVEPNTSPLANTEGKIFRFGSHKWYGAGKRARKARSCATATVAGRALSVRETRQAKEHEVAGADKAEHLKHYSPPAEGNCGWHCISAIANRMVNSIFETTLPERVRPPDDWATDDDLANAIQILRLPAALDRNGACTSAKYVLKLEGEHWTVTVTPGMSPSLLPLECVQGCCEHKGGLGSPDAIEVSGFDPACLDWLAEVMHLPSSAIPAALAEMSGDSDRSASPVTTVWTVSQFFARHSGGNHPDQVRLGKIISLCQVIEDCCCSQNKTNRVTPEEVAAKIDLYLRGATNLEECLARLEKARPPRVIDTSFDWDVVLPGVEAATQTNKLPQVNQCRALVPVVTQKSLDNNSVPLTAFSLANYYYRAQGDEVRHRERLTAVLSKLEEVVREEYGLMPTEPGPRPTLPRGLDELKDQMEEDLLRLANAQATSDMMAWAVEQVDLKTWVKNYPRWTPPPPPPKVQPRKTKPVKSLPERKPVPAPRRKVGPDCGSPVSLGGDVPNSWEDLAVSSPLDLPTPPEPATLSSELVIVSSPQCIFRPATPLSEPAPIPAPRGTVSRPVTPLSEPIPVPAPRRKFQQVKRLSSAAAVPLHQNEPLDLSASSQTEYEASPSAPPQSGGVLGVEGHEAEETLSEISDMSGNIKPASVSSSSSLSSVEITRPKYSAQAIIDSGGPCSGHLQGVKETCLSVMREACDATKLDDPATQEWLSRMWDRVDMLTWRNTSVCQAIRTLDGRLKFLPKMILETPPPYPCEFVMMPHTPAPSVGAESDLTIGSVATEDVPRILEKIENVGEMANQEPSAFSEDKPVDDQLVNDPRISSRRPDESTAAPSAGTGGAGSFTDLPSSDGADADGGGPFRTAKRKAERLFDQLSRQVFDLVSHLPVFFSRLFHPGGGYSTGDWGFAAFTLLCLFLCYSYPAFGIAPLLGVFSGTSRRVRMGVFGCWLAFAVGLFKPVSDPVGAACEFDSPECRNILLSFELLKPWDPVRSLVVGPVGLGLAILGRLLGGARCIWHFLLRLGIVADCILAGAYVLSQGRCKKCWGSCIRTAPNEVAFNVFPFTRATRSSLIDLCDRFCAPKGMDPIFLATGWRGCWAGRSPIEQPSEKPIAFAQLDEKKITARTVVAQPYDPNQAVKCLRVLQAGGAMVAEAVPKVVKVSAVPFRAPFFPTGVKVDPDCRVVVDPDTFTAALRSGYSTTNLVLGVGDFAQLNGLKIRQISKPSGGGPHLMAALHVACSMALHMLTGIYVTAVGSCGTGTNDPWCANPFAVPGYGPGSLCTSRLCISQHGLTLPLTALVAGFGIQEIALVVLIFVSIGGMAHRLSCKADMLCILLAIASYVWVPLTWLLCVFPCWLRCFSLHPLTILWLVFFLISVNMPSGILAMVLLVSLWLLGRYTNVAGLVTPYDIHHYTSGPRGVAALATAPDGTYLAAVRRAALTGRTMLFTPSQLGSLLEGAFRTRKPSLNTVNVIGSSMGSGGVFTIDGKVKCVTAAHVLTGNSARVSGVGFNQMLDFDVKGDFAIADCPNWQGAAPKAQFCADGWTGRAYWLTSSGVEPGVIGKGFAFCFTACGDSGSPVITEAGELVGVHTGSNKQGGGIVTRPSGQFCNVAPIKLSELSEFFAGPKVPLGDVKVGSHIIKDISEVPSDLCALLAAKPELEGGLSTVQLLCVFFLLWRMMGHAWTPLVAVSFFILNEVLPAVLVRSVFSFGMFVLSWLTPWSAQILMIRLLTAALNRNRWSLAFFSLGAVTGFVADLAATQGHPLQAVMNLSTYAFLPRMMVVTSPVPVITCGVVHLLAIILYLFKYRGLHQILVGDGVFSAAFFLRYFAEGKLREGVSQSCGMNHESLTGALAMRLNDEDLDFLMKWTDFKCFVSASNMRNAAGQFIEAAYAKALRVELAQLVQVDKVRGVLAKLEAFADTVAPQLSPGDIVVALGHTPVGSIFDLKVGSTKHTLQAIETRVLAGSKMTVARVVDPTPTPPPAPVPIPLPPKVLENGPNAWGDEDRLNKKKRRRMEALGIYVMGGKKYQKFWDKNSGDVFYEEVHNNTDEWECLRVGDPADFDPEKGTLCGHVTIENKAYHVYISPSGKKFLVPVNPENGRVQWEAAKLSMEQALGMMNVDGELTAKELEKLKRIIDKLQGLTKEQCLNCLLAASGLTRCGRGGLVVTETAVKIVKFHNRTFTLGPVNLKVASEVELKDAVEHNQHPVARPIDGGVVLLRSAVPSLIDVLISGADASPKLLAHHGPGNTGIDGTLWDFESEATKEEVALSAQIIQACDIRRGDAPKIGLPYKLYPVRGNPERVKGVLQNTRFGDIPYKTPSDTGSPVHAAACLTPNATPVTDGRSVLATTMPPGFELYVPTIPASVLDYLDSRPDCPKQLTEHGCEDAALKDLSKYDLSTQGFVLPGVLRLVRKYLFAHVGKCPPVHRPSTYPAKNSMAGINGNRFPTKDIQSVPEIDVLCAQAVRENWQTVTPCTLKKQYCGKKKTRTILGTNNFIALAHRAALSGVTQGFMKKAFNSPIALGKNKFKELQTSVLGRCLEADLASCDRSTPAIVRWFAANLLYELACAEEHLPSYVLNCCHDLLVTQSGAVTKRGGLSSGDPITSVSNTIYSLVIYAQHMVLSYFKSGHPHGLLFLQDQLKFEDMLKVQPLIVYSDDLVLYAESPTMPNYHWWVEHLNLMLGFQTDPKKTAITDSPSFLGCRIINGRQLVPNRDRILAALAYHMKASNVSEYYASAAAILMDSCACLEYDPEWFEELVVGIAQCARKDGYSFPGTPFFMSMWEKLRSNYEGKKSRVCGYCGAPAPYATACGLDVCIYHTHFHQHCPVTIWCGHPAGSGSCSECKSPVGKGTSPLDEVLEQVPYKPPRTVIMHVEQGLTPLDPGRYQTRRGLVSVRRGIRGNEVELPDGDYASTALLPTCKEINMVAVASNVLRSRFIIGPPGAGKTYWLLQQVQDGDVIYTPTHQTMLDMIRALGTCRFNVPAGTTLQFPVPSRTGPWVRILAGGWCPGKNSFLDEAAYCNHLDVLRLLSKTTLTCLGDFKQLHPVGFDSHCYVFDIMPQTQLKTIWRFGQNICDAIQPDYRDKLMSMVNTTRVTYVEKPVRYGQVLTPYHRDREDDAITIDSSQGATFDVVTLHLPTKDSLNRQRALVAITRARHAIFVYDPHRQLQGLFDLPAKGTPVNLAVHRDGQLIVLDRNNKECTVAQALGNGDKFRATDKRVVDSLRAICADLEGSSSPLPKVAHNLGFYFSPDLTQFAKLPVELAPHWPVVTTQNNEKWPDRLVASLRPIHKYSRACIGAGYMVGPSVFLGTPGVVSYYLTKFVKGEAQLLPETVFSTGRIEVDCREYLDDREREVAASLPHAFIGDVKGTTVGGCHHVTSRYLPRVLPKESVAVVGVSSPGKAAKALCTLTDVYLPDLEAYLHPETQSKCWKMMLDFKEVRLMVWRDKTAYFQLEGRYFTWYQLASYASYIRVPVNSTVYLDPCMGPALCNRRVVGSTHWGADLAVTPYDYGAKIILSSAYHGEMPPGYKILACAEFSLDDPVRYKHTWGFESDTAYLYEFTGNGEDWEDYNDAFRARQEGKIYKATATSLKFHFPPGPVIEPTLGLN.

Residues 8-28 (CTCTPNARVFVAEGQVYCTRC) form a C4-type; atypical zinc finger. In terms of domain architecture, Peptidase C31 spans 69 to 180 (ECSPAGACWL…EDFCPFECAM (112 aa)). Residues 69–182 (ECSPAGACWL…FCPFECAMAT (114 aa)) are PCP1-alpha. Residues Cys-76 and His-146 each act as for Nsp1-alpha papain-like cysteine proteinase activity in the active site. The important for host EIF2AK2 inhibition stretch occupies residues 199–200 (IS). A PCP1-beta region spans residues 263-382 (DTVPEGNCWW…IFRFGSHKWY (120 aa)). The region spanning 263 to 383 (DTVPEGNCWW…FRFGSHKWYG (121 aa)) is the Peptidase C32 domain. Active-site for Nsp1-beta papain-like cysteine proteinase activity residues include Cys-270 and His-339. The interval 426-513 (LKHYSPPAEG…GEHWTVTVTP (88 aa)) is OTU-like. In terms of domain architecture, Peptidase C33 spans 428–535 (HYSPPAEGNC…QGCCEHKGGL (108 aa)). Residues Cys-437 and His-506 each act as for Nsp2 cysteine proteinase activity in the active site. Disordered stretches follow at residues 809–862 (RWTP…NSWE), 898–979 (ATPL…GVLG), and 1153–1213 (NQEP…GGGP). Residues 810–819 (WTPPPPPPKV) show a composition bias toward pro residues. The next 8 helical transmembrane spans lie at 1266-1286 (LCLF…LGVF), 1296-1316 (GVFG…SDPV), 1345-1365 (SLVV…LGGA), 1368-1388 (IWHF…GAYV), 1583-1603 (LMAA…GIYV), 1650-1670 (ALVA…FVSI), 1685-1705 (CILL…LCVF), and 1719-1739 (ILWL…LAMV). Residues 1266–1388 (LCLFLCYSYP…ADCILAGAYV (123 aa)) are HD1. Residues 1583–1745 (LMAALHVACS…LAMVLLVSLW (163 aa)) form an HD2 region. The Peptidase S32 domain maps to 1810-2013 (GAFRTRKPSL…ALLAAKPELE (204 aa)). Catalysis depends on charge relay system; for 3C-like serine proteinase activity residues His-1848, Asp-1873, and Ser-1927. 5 helical membrane passes run 2012–2032 (LEGG…WRMM), 2060–2080 (FSFG…ILMI), 2092–2112 (WSLA…LAAT), 2137–2157 (SPVP…LYLF), and 2164–2184 (QILV…FAEG). Residues 2036–2157 (WTPLVAVSFF…HLLAIILYLF (122 aa)) form an HD3 region. Residues 2329-2358 (PTPTPPPAPVPIPLPPKVLENGPNAWGDED) form a disordered region. A compositionally biased stretch (pro residues) spans 2330-2344 (TPTPPPAPVPIPLPP). Residues 2488–2651 (IIDKLQGLTK…LPYKLYPVRG (164 aa)) form the NiRAN domain. In terms of domain architecture, RdRp catalytic spans 2890–3024 (GRCLEADLAS…YAESPTMPNY (135 aa)). The region spanning 3145-3208 (GKKSRVCGYC…SPVGKGTSPL (64 aa)) is the AV ZBD domain. Zn(2+) is bound by residues Cys-3151, Cys-3154, Cys-3164, Cys-3169, His-3172, His-3174, His-3176, His-3178, Cys-3185, His-3187, Cys-3194, and Cys-3197. A (+)RNA virus helicase ATP-binding domain is found at 3265 to 3417 (ASTALLPTCK…VFDIMPQTQL (153 aa)). 3298-3305 (GKTYWLLQ) contacts ATP. Residues 3418–3546 (KTIWRFGQNI…AVHRDGQLIV (129 aa)) form the (+)RNA virus helicase C-terminal domain. In terms of domain architecture, AV-Nsp11N/CoV-Nsp15M spans 3585–3681 (EGSSSPLPKV…LTKFVKGEAQ (97 aa)). The NendoU domain occupies 3683-3805 (LPETVFSTGR…MVWRDKTAYF (123 aa)). Residues His-3714, His-3729, and Lys-3758 contribute to the active site.

This sequence belongs to the arteriviridae polyprotein family. Nsp1-alpha papain-like: Interacts with host RNF31. In terms of assembly, interacts with host EIF2AK2; this interaction occurs in host stress granules and leads to EIF2AK2 inhibition. Interacts with host G3BP1; this interaction probably plays a role in Nsp1-beta-mediated inhibition of host EIF2AK2. As to quaternary structure, interacts with host DDX18; this interaction redistributes host DDX18 to the cytoplasm. Interacts with host IFITM1. In terms of assembly, interacts with host DDX5. As to quaternary structure, interacts with host OTULIN. Interacts with host LGALS3. Specific enzymatic cleavages in vivo by its own proteases yield mature proteins. Nsp1 is autocleaved into two subunits, Nsp1-alpha and Nsp1-beta. There are two alternative pathways for processing. Either nsp4-5 is cleaved, which represents the major pathway or the nsp5-6 and nsp6-7 are processed, which represents the minor pathway. The major pathway occurs when nsp2 acts as a cofactor for nsp4.

It localises to the host nucleus. The protein localises to the host cytoplasm. It is found in the host membrane. The protein resides in the host endoplasmic reticulum. Its subcellular location is the host perinuclear region. The enzyme catalyses RNA(n) + a ribonucleoside 5'-triphosphate = RNA(n+1) + diphosphate. The catalysed reaction is ATP + H2O = ADP + phosphate + H(+). It carries out the reaction Thiol-dependent hydrolysis of ester, thioester, amide, peptide and isopeptide bonds formed by the C-terminal Gly of ubiquitin (a 76-residue protein attached to proteins as an intracellular targeting signal).. It catalyses the reaction uridylyl-uridylyl-ribonucleotide-RNA = a 3'-end uridylyl-2',3'-cyclophospho-uridine-RNA + a 5'-end dephospho-ribonucleoside-RNA. In terms of biological role, contains the activities necessary for the transcription of negative stranded RNA, leader RNA, subgenomic mRNAs and progeny virion RNA as well as proteinases responsible for the cleavage of the polyprotein into functional products. Inhibits host IFN-beta production. Plays a role in the degradation of the host transcriptional activator CREBBP protein. The degradation of host CREBBP which is a key component of the IFN enhanceosome is likely responsible for the inhibition of interferon mediated by Nsp1-alpha. Also participates in the inhibition of host NF-kappa-B activation by counteracting LUBAC-dependent induction of NF-kappa-B. Reduces host NEMO ubiquitination by blocking the interaction between the two LUBAC complex components RNF31 and SHARPIN. Its function is as follows. Plays a role in blocking host mRNA nuclear export to the cytoplasm and subversion of host protein synthesis. Additionally, inhibits the interferon-activated JAK/STAT signal transduction by mediating the ubiquitination and subsequent proteasomal degradation of host KPNA1. Repurposes the host antiviral stress granules into a proviral platform to counteract the EIF2AK2/PKR restriction, thereby regulating the host inflammatory response. Functionally, multifunctional protein that acts as a viral protease and as a viral antagonist of host immune response. Cleaves the nsp2/nsp3 site in the viral polyprotein. Displays deubiquitinating activity that cleaves both ubiquitinated and ISGylated products and therefore inhibits ubiquitin and ISG15-dependent host innate immunity. Also deubiquinates host NFKBIA, thereby interfering with NFKBIA degradation and impairing subsequent NF-kappa-B activation. In terms of biological role, plays a role in the inhibition of the immune response by interacting with host IFITM1. This interaction leads to the proteasomal degradation of the IFN-induced antiviral protein IFITM1. Cleaves the majority of cleavage sites present in the C-terminus of the polyprotein. Triggers host apoptosis through caspase-3, -8, and -9 activations. Subverts host innate immune responses through its protease activity. Targets the NF-kappa-B essential modulator NEMO and mediates its cleavage. Blocks host interferon beta induction and downstream signaling by cleaving mitochondrial MAVS, dislodging it from the mitochondria. Impairs host defense by cleaving host mRNA-decapping enzyme DCP1A to attenuate its antiviral activity. Its function is as follows. Plays a role in the initial induction of autophagosomes from host endoplasmic reticulum. Functionally, plays a role in the inhibition of host STAT3 signaling pathway by inducing the degradation of STAT3. In terms of biological role, responsible for replication and transcription of the viral RNA genome. Displays RNA and DNA duplex-unwinding activities with 5' to 3' polarity. Its function is as follows. Plays a role in viral transcription/replication and prevents the simultaneous activation of host cell dsRNA sensors, such as MDA5/IFIH1, OAS, PKR and NLRP3 inflammasome. Acts by degrading the 5'-polyuridines generated during replication of the poly(A) region of viral genomic and subgenomic RNAs. Catalyzes a two-step reaction in which a 2'3'-cyclic phosphate (2'3'-cP) is first generated by 2'-O transesterification, which is then hydrolyzed to a 3'-phosphate (3'-P). If not degraded, poly(U) RNA would hybridize with poly(A) RNA tails and activate host dsRNA sensors. Also plays a role in the inhibition of host type I interferon production by recruiting host OTULIN to promote removal of linear ubiquitination targeting host NEMO. The polypeptide is Replicase polyprotein 1ab (rep) (Porcine reproductive and respiratory syndrome virus (strain 16244B) (PRRSV)).